Here is a 95-residue protein sequence, read N- to C-terminus: Large ribosomal subunit protein bL21 (95 aa).

Belongs to the bacterial ribosomal protein bL21 family. In terms of assembly, part of the 50S ribosomal subunit. Contacts protein L20.

This protein binds to 23S rRNA in the presence of protein L20. This is Large ribosomal subunit protein bL21 from Prosthecochloris vibrioformis (Chlorobium vibrioforme).